Consider the following 981-residue polypeptide: Colossin-C (981 aa).

The signal sequence occupies residues 1-23 (MKILYSLLLISSIILNTVLNISS). Asn63 is a glycosylation site (N-linked (GlcNAc...) asparagine). The tract at residues 172–195 (EQTQPPTQPPTQPPTQPPTPPPFT) is disordered. Pro residues predominate over residues 177–194 (PTQPPTQPPTQPPTPPPF). N-linked (GlcNAc...) asparagine glycans are attached at residues Asn222, Asn591, and Asn811.

It belongs to the serine-aspartate repeat-containing protein (SDr) family.

The protein localises to the secreted. This Dictyostelium discoideum (Social amoeba) protein is Colossin-C (colC).